Here is a 302-residue protein sequence, read N- to C-terminus: Putative gluconeogenesis factor (302 aa).

The protein belongs to the gluconeogenesis factor family.

Its subcellular location is the cytoplasm. Its function is as follows. Required for morphogenesis under gluconeogenic growth conditions. The chain is Putative gluconeogenesis factor (ybhK) from Escherichia coli O157:H7.